A 304-amino-acid chain; its full sequence is ATP phosphoribosyltransferase (304 aa).

It belongs to the ATP phosphoribosyltransferase family. Long subfamily. The cofactor is Mg(2+).

The protein resides in the cytoplasm. It catalyses the reaction 1-(5-phospho-beta-D-ribosyl)-ATP + diphosphate = 5-phospho-alpha-D-ribose 1-diphosphate + ATP. It participates in amino-acid biosynthesis; L-histidine biosynthesis; L-histidine from 5-phospho-alpha-D-ribose 1-diphosphate: step 1/9. With respect to regulation, feedback inhibited by histidine. Functionally, catalyzes the condensation of ATP and 5-phosphoribose 1-diphosphate to form N'-(5'-phosphoribosyl)-ATP (PR-ATP). Has a crucial role in the pathway because the rate of histidine biosynthesis seems to be controlled primarily by regulation of HisG enzymatic activity. The sequence is that of ATP phosphoribosyltransferase from Xanthomonas oryzae pv. oryzae (strain MAFF 311018).